The primary structure comprises 403 residues: Imidazolonepropionase (403 aa).

Fe(3+)-binding residues include histidine 74 and histidine 76. Zn(2+) is bound by residues histidine 74 and histidine 76. 4-imidazolone-5-propanoate-binding residues include arginine 83, tyrosine 146, and histidine 179. Tyrosine 146 serves as a coordination point for N-formimidoyl-L-glutamate. Histidine 242 provides a ligand contact to Fe(3+). A Zn(2+)-binding site is contributed by histidine 242. Residue glutamine 245 participates in 4-imidazolone-5-propanoate binding. Aspartate 317 contacts Fe(3+). Aspartate 317 is a binding site for Zn(2+). N-formimidoyl-L-glutamate is bound by residues asparagine 319 and glycine 321. A 4-imidazolone-5-propanoate-binding site is contributed by threonine 322.

The protein belongs to the metallo-dependent hydrolases superfamily. HutI family. Zn(2+) is required as a cofactor. Fe(3+) serves as cofactor.

The protein localises to the cytoplasm. It catalyses the reaction 4-imidazolone-5-propanoate + H2O = N-formimidoyl-L-glutamate. It functions in the pathway amino-acid degradation; L-histidine degradation into L-glutamate; N-formimidoyl-L-glutamate from L-histidine: step 3/3. In terms of biological role, catalyzes the hydrolytic cleavage of the carbon-nitrogen bond in imidazolone-5-propanoate to yield N-formimidoyl-L-glutamate. It is the third step in the universal histidine degradation pathway. This is Imidazolonepropionase from Sphingopyxis alaskensis (strain DSM 13593 / LMG 18877 / RB2256) (Sphingomonas alaskensis).